The following is a 471-amino-acid chain: Ribonuclease 3 (471 aa).

The segment covering 1-10 (MGSKVAGKKK) has biased composition (basic residues). Disordered regions lie at residues 1-29 (MGSK…RENI) and 168-189 (NLNE…PTKA). A compositionally biased stretch (polar residues) spans 20–29 (ENGSQQRENI). Residues 172–184 (KEDEEEDEGEDSY) are compositionally biased toward acidic residues. In terms of domain architecture, RNase III spans 227–331 (LSGSEMINAH…YIGGLMEDDP (105 aa)). The 69-residue stretch at 369–437 (NAKRQLYSLI…AENALRDKKM (69 aa)) folds into the DRBM domain. The interval 451-471 (SESVLKDPSQKNKKRKFSDTS) is disordered. Positions 461–471 (KNKKRKFSDTS) are enriched in basic residues.

The catalysed reaction is Endonucleolytic cleavage to 5'-phosphomonoester.. Functionally, dsRNA-specific nuclease that cleaves eukaryotic pre-ribosomal RNA at the U3 snoRNP-dependent A0 site in the 5'-external transcribed spacer (ETS) and in the 3'-ETS. In vitro, cleaves synthetic 5'-ETS RNA A0 site in the absence of snoRNA or other factors. Has an essential growth function in addition to pre-rRNA processing. This is Ribonuclease 3 (RNT1) from Saccharomyces cerevisiae (strain ATCC 204508 / S288c) (Baker's yeast).